Reading from the N-terminus, the 369-residue chain is Uroporphyrinogen decarboxylase (369 aa).

Residues 28-32, aspartate 78, tyrosine 154, serine 209, and histidine 339 contribute to the substrate site; that span reads RQAGR.

Belongs to the uroporphyrinogen decarboxylase family. As to quaternary structure, homodimer.

It localises to the cytoplasm. It catalyses the reaction uroporphyrinogen III + 4 H(+) = coproporphyrinogen III + 4 CO2. Its pathway is porphyrin-containing compound metabolism; protoporphyrin-IX biosynthesis; coproporphyrinogen-III from 5-aminolevulinate: step 4/4. Functionally, catalyzes the decarboxylation of four acetate groups of uroporphyrinogen-III to yield coproporphyrinogen-III. The protein is Uroporphyrinogen decarboxylase of Polaromonas sp. (strain JS666 / ATCC BAA-500).